The sequence spans 816 residues: H(+)/Cl(-) exchange transporter 5 (816 aa).

Over 1-124 (MAMWQGAMDN…WALIHSVSDA (124 aa)) the chain is Cytoplasmic. The next 2 membrane-spanning stretches (helical) occupy residues 125–162 (FSGW…ICTG) and 208–231 (VNYF…VKAF). The Selectivity filter part_1 signature appears at 237-241 (GSGIP). A chloride-binding site is contributed by Ser238. Residues 240–247 (IPEIKTIL) constitute an intramembrane region (helical). The next 2 helical transmembrane spans lie at 256–275 (LGKW…VSSG) and 281–300 (EGPL…HCFN). A Selectivity filter part_2 motif is present at residues 279-283 (GKEGP). 2 consecutive intramembrane regions (helical) follow at residues 312–324 (VLSA…VSVA) and 328–336 (PIGGVLFSL). A run of 5 helical transmembrane segments spans residues 348 to 366 (LWRS…RSIN), 389 to 414 (LVPF…IAWC), 422 to 442 (LGKY…ILAF), 498 to 518 (MWQL…TFGM), and 523 to 542 (GLFI…LGVG). The short motif at 523 to 527 (GLFIP) is the Selectivity filter part_3 element. Position 525 (Phe525) interacts with chloride. Residues 570 to 584 (GLYAMVGAAACLGGV) constitute an intramembrane region (helical). The note=Loop between two helices intramembrane region spans 585-587 (TRM). An intramembrane region (helical) is located at residues 588–599 (TVSLVVIMFELT). The segment at residues 600–604 (GGLEY) is an intramembrane region (note=Loop between two helices). A helical membrane pass occupies residues 605 to 622 (IVPLMAAAMTSKWVADAL). Residues 623-816 (GREGIYDAHI…NQDPESILFN (194 aa)) lie on the Cytoplasmic side of the membrane. A chloride-binding site is contributed by Tyr628. 2 consecutive CBS domains span residues 656-720 (MKPR…ARKK) and 752-811 (ILDL…QDPE). ATP is bound by residues Thr666, 687–689 (YSG), and 794–797 (TKKD).

This sequence belongs to the chloride channel (TC 2.A.49) family. ClC-5/CLCN5 subfamily. In terms of assembly, interacts with NEDD4 and NEDD4L. Post-translationally, ubiquitinated by NEDD4L in the presence of albumin; which promotes endocytosis and proteasomal degradation. As to expression, kidney specific.

The protein resides in the golgi apparatus membrane. It localises to the endosome membrane. Its subcellular location is the cell membrane. The enzyme catalyses 2 chloride(in) + H(+)(out) = 2 chloride(out) + H(+)(in). In terms of biological role, proton-coupled chloride transporter. Functions as antiport system and exchanges chloride ions against protons. Important for normal acidification of the endosome lumen. May play an important role in renal tubular function. The CLC channel family contains both chloride channels and proton-coupled anion transporters that exchange chloride or another anion for protons. The absence of conserved gating glutamate residues is typical for family members that function as channels. In Rattus norvegicus (Rat), this protein is H(+)/Cl(-) exchange transporter 5 (Clcn5).